Here is a 269-residue protein sequence, read N- to C-terminus: Mitochondrial distribution and morphology protein 12 (269 aa).

In terms of domain architecture, SMP-LTD spans 1–269; it reads MSLEVNWEQI…WPNWIEFQGV (269 aa). The interval 72–119 is disordered; that stretch reads ERAGTGEGDEDDGRVAPTSTPMKHQTSGSSDQTDASNPISPSTSHDHE. The span at 88–114 shows a compositional bias: polar residues; sequence PTSTPMKHQTSGSSDQTDASNPISPST.

It belongs to the MDM12 family. Component of the ER-mitochondria encounter structure (ERMES) or MDM complex, composed of MMM1, MDM10, MDM12 and MDM34. An MMM1 homodimer associates with one molecule of MDM12 on each side in a pairwise head-to-tail manner, and the SMP-LTD domains of MMM1 and MDM12 generate a continuous hydrophobic tunnel for phospholipid trafficking.

It is found in the mitochondrion outer membrane. Its subcellular location is the endoplasmic reticulum membrane. Functionally, component of the ERMES/MDM complex, which serves as a molecular tether to connect the endoplasmic reticulum (ER) and mitochondria. Components of this complex are involved in the control of mitochondrial shape and protein biogenesis, and function in nonvesicular lipid trafficking between the ER and mitochondria. MDM12 is required for the interaction of the ER-resident membrane protein MMM1 and the outer mitochondrial membrane-resident beta-barrel protein MDM10. The MDM12-MMM1 subcomplex functions in the major beta-barrel assembly pathway that is responsible for biogenesis of all mitochondrial outer membrane beta-barrel proteins, and acts in a late step after the SAM complex. The MDM10-MDM12-MMM1 subcomplex further acts in the TOM40-specific pathway after the action of the MDM12-MMM1 complex. Essential for establishing and maintaining the structure of mitochondria and maintenance of mtDNA nucleoids. The protein is Mitochondrial distribution and morphology protein 12 of Komagataella phaffii (strain GS115 / ATCC 20864) (Yeast).